A 556-amino-acid polypeptide reads, in one-letter code: Acetyl-coenzyme A thioesterase (556 aa).

One can recognise a HotDog ACOT-type 1 domain in the interval Ala6 to Gly118. Residue Lys34 is modified to N6-succinyllysine. CoA-binding positions include Thr54–Ser56 and Ser83–Ser85. Residue Lys97 is modified to N6-succinyllysine. Position 145 (Arg145) interacts with CoA. An N6-succinyllysine mark is found at Lys160 and Lys229. Residues Met180–Gln295 form the HotDog ACOT-type 2 domain. Lys235 to Arg237 provides a ligand contact to CoA. The START domain occupies Gly341–Asp550.

As to quaternary structure, homodimer or homotetramer.

It is found in the cytoplasm. It localises to the cytosol. It catalyses the reaction acetyl-CoA + H2O = acetate + CoA + H(+). The catalysed reaction is butanoyl-CoA + H2O = butanoate + CoA + H(+). The enzyme catalyses hexanoyl-CoA + H2O = hexanoate + CoA + H(+). Its pathway is lipid metabolism; fatty acid metabolism. Allosterically regulated by ATP (activator) and ADP (inhibitor). Cold labile, it dissociates into inactive monomers at low temperature. Catalyzes the hydrolysis of acyl-CoAs into free fatty acids and coenzyme A (CoASH), regulating their respective intracellular levels. Preferentially hydrolyzes acetyl-CoA. The polypeptide is Acetyl-coenzyme A thioesterase (Acot12) (Rattus norvegicus (Rat)).